The sequence spans 1180 residues: Polyamine-transporting ATPase 13A2 (1180 aa).

At 1 to 44 (MSADSSPLVGSTPTGYGTLTIGTSIDPLSSSVSSVRLSGYCGSP) the chain is on the cytoplasmic side. The stretch at 45-65 (WRVIGYHVVVWMMAGIPLLLF) is an intramembrane region. The Cytoplasmic portion of the chain corresponds to 66–235 (RWKPLWGVRL…KSYPQLLVDE (170 aa)). Ser-151 carries the post-translational modification Phosphoserine. A helical membrane pass occupies residues 236-253 (ALNPYYGFQAFSIALWLA). Residues 254–256 (DHY) lie on the Lumenal side of the membrane. A helical membrane pass occupies residues 257–276 (YWYALCIFLISSISICLSLY). Residues 277 to 427 (KTRKQSQTLR…NFKFYKHSMK (151 aa)) lie on the Cytoplasmic side of the membrane. A helical transmembrane segment spans residues 428 to 448 (FVAALSVLALLGTIYSIFILY). Over 449–463 (RNRVPLNEIVIRALD) the chain is Lumenal. A helical transmembrane segment spans residues 464–484 (LVTVVVPPALPAAMTVCTLYA). At 485–930 (QSRLRRQGIF…REGRCSLDTS (446 aa)) the chain is on the cytoplasmic side. The 4-aspartylphosphate intermediate role is filled by Asp-513. Mg(2+) contacts are provided by Asp-878 and Asp-882. The helical transmembrane segment at 931–951 (FSVFKYMALYSLTQFISVLIL) threads the bilayer. Topologically, residues 952-957 (YTINTN) are lumenal. The helical transmembrane segment at 958-978 (LGDLQFLAIDLVITTTVAVLM) threads the bilayer. Residues 979 to 994 (SRTGPALVLGRVRPPG) lie on the Cytoplasmic side of the membrane. Residues 995–1015 (ALLSVPVLSSLLLQMVLVTGV) form a helical membrane-spanning segment. The Lumenal segment spans residues 1016–1048 (QLGGYFLTLAQPWFVPLNRTVAAPDNLPNYENT). Asn-1033 carries N-linked (GlcNAc...) asparagine glycosylation. A helical transmembrane segment spans residues 1049–1069 (VVFSLSSFQYLILAAAVSKGA). Over 1070 to 1080 (PFRRPLYTNVP) the chain is Cytoplasmic. The helical transmembrane segment at 1081–1101 (FLVALALLSSVLVGLVLVPGL) threads the bilayer. At 1102 to 1117 (LQGPLALRNITDTGFK) the chain is on the lumenal side. Asn-1110 carries an N-linked (GlcNAc...) asparagine glycan. A helical membrane pass occupies residues 1118–1138 (LLLLGLVTLNFVGAFMLESVL). Topologically, residues 1139-1180 (DQCLPACLRRLRPKRASKKRFKQLERELAEQPWPPLPAGPLR) are cytoplasmic.

This sequence belongs to the cation transport ATPase (P-type) (TC 3.A.3) family. Type V subfamily. As to quaternary structure, interacts with MYCBP2; the interaction inhibits the ubiquitination of TSC2 by MYCBP2. Interacts with HDAC6; the interaction results in recruitment of HDAC6 to lysosomes to promote CTTN deacetylation. Autophosphorylated. Accumulates in an inactive autophosphorylated state and autophosphorylation is stimulated by phosphatidic acid and phosphatidylinositol 3,5-bisphosphate but not by Mn(2+) or Zn(2+). The presence of spermine results in a dose-dependent reduction in autophosphorylation. In terms of tissue distribution, expressed in brain; protein levels are markedly increased in brain from subjects with Parkinson disease and subjects with dementia with Lewy bodies. Detected in pyramidal neurons located throughout the cingulate cortex (at protein level). In the substantia nigra, it is found in neuromelanin-positive dopaminergic neurons (at protein level).

The protein localises to the lysosome membrane. It is found in the late endosome membrane. It localises to the endosome. Its subcellular location is the multivesicular body membrane. The protein resides in the cytoplasmic vesicle. The protein localises to the autophagosome membrane. It carries out the reaction spermidine(out) + ATP + H2O = spermidine(in) + ADP + phosphate + H(+). The enzyme catalyses spermine(out) + ATP + H2O = spermine(in) + ADP + phosphate + H(+). Its activity is regulated as follows. Accumulates in an inactive autophosphorylated state. The presence of spermine results in a dose-dependent reduction in autophosphorylation. Its function is as follows. ATPase which acts as a lysosomal polyamine exporter with high affinity for spermine. Also stimulates cellular uptake of polyamines and protects against polyamine toxicity. Plays a role in intracellular cation homeostasis and the maintenance of neuronal integrity. Contributes to cellular zinc homeostasis. Confers cellular protection against Mn(2+) and Zn(2+) toxicity and mitochondrial stress. Required for proper lysosomal and mitochondrial maintenance. Regulates the autophagy-lysosome pathway through the control of SYT11 expression at both transcriptional and post-translational levels. Facilitates recruitment of deacetylase HDAC6 to lysosomes to deacetylate CTTN, leading to actin polymerization, promotion of autophagosome-lysosome fusion and completion of autophagy. Promotes secretion of exosomes as well as secretion of SCNA via exosomes. Plays a role in lipid homeostasis. In Homo sapiens (Human), this protein is Polyamine-transporting ATPase 13A2.